Here is a 495-residue protein sequence, read N- to C-terminus: Neuronal acetylcholine receptor subunit beta-4 (495 aa).

Positions 1-20 (MRGTPLLLVSLFALLQPGDC) are cleaved as a signal peptide. Topologically, residues 21–235 (RLANAEEKLM…IIKRKPLFYT (215 aa)) are extracellular. Residues Asn-35, Asn-92, Asn-137, and Asn-165 are each glycosylated (N-linked (GlcNAc...) asparagine). Cys-152 and Cys-166 form a disulfide bridge. A helical membrane pass occupies residues 236–256 (INLIIPCVLITSLAILVFYLP). Residues 257–264 (SDCGEKMT) lie on the Cytoplasmic side of the membrane. Glu-261 contacts Na(+). Residues 265–285 (LCISVLLALTFFLLLISKIVP) form a helical membrane-spanning segment. At 286–297 (PTSLDIPLIGKY) the chain is on the extracellular side. The helical transmembrane segment at 298 to 318 (LLFTMVLVTFSIVTTVCVLNV) threads the bilayer. Over 319–463 (HHRSPSTHTM…WKFVAMVVDR (145 aa)) the chain is Cytoplasmic. Residues 464-484 (LFLWVFVIVCILGTMGLFLPP) form a helical membrane-spanning segment. The Extracellular portion of the chain corresponds to 485-495 (LFQIHAPSKGL).

The protein belongs to the ligand-gated ion channel (TC 1.A.9) family. Acetylcholine receptor (TC 1.A.9.1) subfamily. Beta-4/CHRNB4 sub-subfamily. As to quaternary structure, neuronal AChR is composed of two different types of subunits: alpha and beta. CHRNB4/Beta-4 subunit can be combined to CHRNA2/alpha-2, CHRNA3/alpha-3 or CHRNA4/alpha-4, CHRNA5/alpha-5 and CHRNB3/beta-3 to give rise to functional receptors. Forms stoichiometries such as (CHRNA3)2:(CHRNB4)3 or (CHRNA3:CHRNB4)2:CHRNB3. Interacts with RIC3; which is required for proper folding and assembly. Interacts with LYPD6. In terms of tissue distribution, predominantly expressed by immature T-cells in the thymus.

The protein resides in the synaptic cell membrane. It localises to the cell membrane. It catalyses the reaction K(+)(in) = K(+)(out). The catalysed reaction is Na(+)(in) = Na(+)(out). The enzyme catalyses Ca(2+)(in) = Ca(2+)(out). With respect to regulation, activated by a myriad of ligands such as acetylcholine, cytisine, nicotine, choline and epibatidine. The heteropentamer CHRNA3:CHRNB4 activity is blocked by the alpha-conotoxin ImI and AuIB. Functionally, component of neuronal acetylcholine receptors (nAChRs) that function as pentameric, ligand-gated cation channels with high calcium permeability among other activities. nAChRs are excitatory neurotrasnmitter receptors formed by a collection of nAChR subunits known to mediate synaptic transmission in the nervous system and the neuromuscular junction. Each nAchR subunit confers differential attributes to channel properties, including activation, deactivation and desensitization kinetics, pH sensitivity, cation permeability, and binding to allosteric modulators. CHRNB4 forms heteropentameric neuronal acetylcholine receptors with CHRNA2, CHRNA3 and CHRNA4, as well as CHRNA5 and CHRNB3 as accesory subunits. CHRNA3:CHRNB4 being predominant in neurons of the autonomic ganglia, it is known as ganglionic nicotinic receptor. CHRNA3:CHRNB4 or CHRNA3:CHRNA5:CHRNB4 play also an important role in the habenulo-interpeduncular tract, modulating the mesolimbic dopamine system and affecting reward circuits and addiction. Hypothalamic CHRNA3:CHRNB4 nAChR activation by nicotine leads to activation of POMC neurons and a decrease in food intake. This Mus musculus (Mouse) protein is Neuronal acetylcholine receptor subunit beta-4 (Chrnb4).